The following is a 2201-amino-acid chain: MGAMTQLLAGVFLAFLALATEGGVLKKVIRHKRQSGVNATLPEENQPVVFNHVYNIKLPVGSQCSVDLESASGEKDLAPPSEPSESFQEHTVDGENQIVFTHRINIPRRACGCAAAPDVKELLSRLEELENLVSSLREQCTAGAGCCLQPATGRLDTRPFCSGRGNFSTEGCGCVCEPGWKGPNCSEPECPGNCHLRGRCIDGQCICDDGFTGEDCSQLACPSDCNDQGKCVNGVCICFEGYAGADCSREICPVPCSEEHGTCVDGLCVCHDGFAGDDCNKPLCLNNCYNRGRCVENECVCDEGFTGEDCSELICPNDCFDRGRCINGTCYCEEGFTGEDCGKPTCPHACHTQGRCEEGQCVCDEGFAGVDCSEKRCPADCHNRGRCVDGRCECDDGFTGADCGELKCPNGCSGHGRCVNGQCVCDEGYTGEDCSQLRCPNDCHSRGRCVEGKCVCEQGFKGYDCSDMSCPNDCHQHGRCVNGMCVCDDGYTGEDCRDRQCPRDCSNRGLCVDGQCVCEDGFTGPDCAELSCPNDCHGQGRCVNGQCVCHEGFMGKDCKEQRCPSDCHGQGRCVDGQCICHEGFTGLDCGQHSCPSDCNNLGQCVSGRCICNEGYSGEDCSEVSPPKDLVVTEVTEETVNLAWDNEMRVTEYLVVYTPTHEGGLEMQFRVPGDQTSTIIQELEPGVEYFIRVFAILENKKSIPVSARVATYLPAPEGLKFKSIKETSVEVEWDPLDIAFETWEIIFRNMNKEDEGEITKSLRRPETSYRQTGLAPGQEYEISLHIVKNNTRGPGLKRVTTTRLDAPSQIEVKDVTDTTALITWFKPLAEIDGIELTYGIKDVPGDRTTIDLTEDENQYSIGNLKPDTEYEVSLISRRGDMSSNPAKETFTTGLDAPRNLRRVSQTDNSITLEWRNGKAAIDSYRIKYAPISGGDHAEVDVPKSQQATTKTTLTGLRPGTEYGIGVSAVKEDKESNPATINAATELDTPKDLQVSETAETSLTLLWKTPLAKFDRYRLNYSLPTGQWVGVQLPRNTTSYVLRGLEPGQEYNVLLTAEKGRHKSKPARVKASTEQAPELENLTVTEVGWDGLRLNWTAADQAYEHFIIQVQEANKVEAARNLTVPGSLRAVDIPGLKAATPYTVSIYGVIQGYRTPVLSAEASTGETPNLGEVVVAEVGWDALKLNWTAPEGAYEYFFIQVQEADTVEAAQNLTVPGGLRSTDLPGLKAATHYTITIRGVTQDFSTTPLSVEVLTEEVPDMGNLTVTEVSWDALRLNWTTPDGTYDQFTIQVQEADQVEEAHNLTVPGSLRSMEIPGLRAGTPYTVTLHGEVRGHSTRPLAVEVVTEDLPQLGDLAVSEVGWDGLRLNWTAADNAYEHFVIQVQEVNKVEAAQNLTLPGSLRAVDIPGLEAATPYRVSIYGVIRGYRTPVLSAEASTAKEPEIGNLNVSDITPESFNLSWMATDGIFETFTIEIIDSNRLLETVEYNISGAERTAHISGLPPSTDFIVYLSGLAPSIRTKTISATATTEALPLLENLTISDINPYGFTVSWMASENAFDSFLVTVVDSGKLLDPQEFTLSGTQRKLELRGLITGIGYEVMVSGFTQGHQTKPLRAEIVTEAEPEVDNLLVSDATPDGFRLSWTADEGVFDNFVLKIRDTKKQSEPLEITLLAPERTRDITGLREATEYEIELYGISKGRRSQTVSAIATTAMGSPKEVIFSDITENSATVSWRAPTAQVESFRITYVPITGGTPSMVTVDGTKTQTRLVKLIPGVEYLVSIIAMKGFEESEPVSGSFTTALDGPSGLVTANITDSEALARWQPAIATVDSYVISYTGEKVPEITRTVSGNTVEYALTDLEPATEYTLRIFAEKGPQKSSTITAKFTTDLDSPRDLTATEVQSETALLTWRPPRASVTGYLLVYESVDGTVKEVIVGPDTTSYSLADLSPSTHYTAKIQALNGPLRSNMIQTIFTTIGLLYPFPKDCSQAMLNGDTTSGLYTIYLNGDKAEALEVFCDMTSDGGGWIVFLRRKNGRENFYQNWKAYAAGFGDRREEFWLGLDNLNKITAQGQYELRVDLRDHGETAFAVYDKFSVGDAKTRYKLKVEGYSGTAGDSMAYHNGRSFSTFDKDTDSAITNCALSYKGAFWYRNCHRVNLMGRYGDNNHSQGVNWFHWKGHEHSIQFAEMKLRPSNFRNLEGRRKRA.

The first 22 residues, 1-22 (MGAMTQLLAGVFLAFLALATEG), serve as a signal peptide directing secretion. An N-linked (GlcNAc...) asparagine glycan is attached at asparagine 38. Serine 65 and serine 70 each carry phosphoserine. Serine 72 is subject to Phosphoserine; by FAM20C. O-linked (Xyl...) (chondroitin sulfate) serine glycosylation is present at serine 72. Residues 118–145 (DVKELLSRLEELENLVSSLREQCTAGAG) are a coiled coil. N-linked (GlcNAc...) asparagine glycans are attached at residues asparagine 166 and asparagine 184. In terms of domain architecture, EGF-like 1; incomplete spans 174–186 (CVCEPGWKGPNCS). EGF-like domains follow at residues 186-217 (SEPE…EDCS), 217-248 (SQLA…ADCS), 248-280 (SREI…DDCN), 280-311 (NKPL…EDCS), 311-342 (SELI…EDCG), 342-373 (GKPT…VDCS), 373-404 (SEKR…ADCG), 404-435 (GELK…EDCS), 435-466 (SQLR…YDCS), 466-497 (SDMS…EDCR), 497-528 (RDRQ…PDCA), 528-559 (AELS…KDCK), 559-590 (KEQR…LDCG), and 590-621 (GQHS…EDCS). Disulfide bonds link cysteine 190–cysteine 200, cysteine 194–cysteine 205, cysteine 207–cysteine 216, cysteine 221–cysteine 231, cysteine 225–cysteine 236, cysteine 238–cysteine 247, cysteine 252–cysteine 263, cysteine 256–cysteine 268, cysteine 270–cysteine 279, cysteine 284–cysteine 294, cysteine 288–cysteine 299, cysteine 301–cysteine 310, cysteine 315–cysteine 325, cysteine 319–cysteine 330, cysteine 332–cysteine 341, cysteine 346–cysteine 356, cysteine 350–cysteine 361, cysteine 363–cysteine 372, cysteine 377–cysteine 387, cysteine 381–cysteine 392, cysteine 394–cysteine 403, cysteine 408–cysteine 418, cysteine 412–cysteine 423, cysteine 425–cysteine 434, cysteine 439–cysteine 449, cysteine 443–cysteine 454, cysteine 456–cysteine 465, cysteine 470–cysteine 480, cysteine 474–cysteine 485, cysteine 487–cysteine 496, cysteine 501–cysteine 511, cysteine 505–cysteine 516, cysteine 518–cysteine 527, cysteine 532–cysteine 542, cysteine 536–cysteine 547, cysteine 549–cysteine 558, cysteine 563–cysteine 573, cysteine 567–cysteine 578, cysteine 580–cysteine 589, cysteine 594–cysteine 604, cysteine 598–cysteine 609, and cysteine 611–cysteine 620. Asparagine 327 carries an N-linked (GlcNAc...) asparagine glycan. 15 Fibronectin type-III domains span residues 625–715 (PPKD…LPAP), 716–804 (EGLK…TRLD), 805–894 (APSQ…TGLD), 895–990 (APRN…TPKD), 991–1075 (LQVS…EQAP), 1076–1165 (ELEN…TGET), 1167–1256 (NLGE…TEEV), 1258–1350 (DMGN…LPQL), 1351–1439 (GDLA…AKEP), 1440–1531 (EIGN…ALPL), 1533–1621 (ENLT…EAEP), 1622–1711 (EVDN…TAMG), 1712–1801 (SPKE…ALDG), 1802–1888 (PSGL…TDLD), and 1889–1977 (SPRD…IGLL). Asparagine 788 carries N-linked (GlcNAc...) asparagine glycosylation. Position 905 is a phosphothreonine (threonine 905). N-linked (GlcNAc...) asparagine glycans are attached at residues asparagine 1018, asparagine 1034, asparagine 1079, asparagine 1093, asparagine 1119, asparagine 1184, asparagine 1210, asparagine 1261, asparagine 1275, asparagine 1301, asparagine 1366, asparagine 1392, asparagine 1445, asparagine 1455, asparagine 1485, and asparagine 1534. Asparagine 1809 carries an N-linked (GlcNAc...) asparagine glycan. A Fibrinogen C-terminal domain is found at 1975–2190 (GLLYPFPKDC…FAEMKLRPSN (216 aa)). Asparagine 2162 is a glycosylation site (N-linked (GlcNAc...) asparagine).

This sequence belongs to the tenascin family. In terms of assembly, homohexamer; disulfide-linked. A homotrimer may be formed in the triple coiled-coil region and may be stabilized by disulfide rings at both ends. Two of such half-hexabrachions may be disulfide linked within the central globule. Interacts with CSPG4. Interacts (via the 3rd fibronectin type-III domain) with integrin ITGA9:ITGB1. Detected in fibroblasts (at protein level).

Its subcellular location is the secreted. The protein resides in the extracellular space. It localises to the extracellular matrix. In terms of biological role, extracellular matrix protein implicated in guidance of migrating neurons as well as axons during development, synaptic plasticity as well as neuronal regeneration. Promotes neurite outgrowth from cortical neurons grown on a monolayer of astrocytes. Ligand for integrins alpha-8/beta-1, alpha-9/beta-1, alpha-V/beta-3 and alpha-V/beta-6. In tumors, stimulates angiogenesis by elongation, migration and sprouting of endothelial cells. The protein is Tenascin (TNC) of Homo sapiens (Human).